A 512-amino-acid polypeptide reads, in one-letter code: ATP synthase subunit alpha, chloroplastic (512 aa).

170-177 (GDRQTGKT) provides a ligand contact to ATP.

Belongs to the ATPase alpha/beta chains family. F-type ATPases have 2 components, CF(1) - the catalytic core - and CF(0) - the membrane proton channel. CF(1) has five subunits: alpha(3), beta(3), gamma(1), delta(1), epsilon(1). CF(0) has four main subunits: a, b, b' and c.

The protein resides in the plastid. It localises to the chloroplast thylakoid membrane. It carries out the reaction ATP + H2O + 4 H(+)(in) = ADP + phosphate + 5 H(+)(out). Functionally, produces ATP from ADP in the presence of a proton gradient across the membrane. The alpha chain is a regulatory subunit. This chain is ATP synthase subunit alpha, chloroplastic, found in Staurastrum punctulatum (Green alga).